We begin with the raw amino-acid sequence, 313 residues long: MTLRILLLLHPTVVSDQNLVESVKSKISAEHPNHSLDQQIINRITQGDVVLSNNTYDEIHYINPNDSQYLEMPILLIKLLNDLLTHDGVLRGDLPKDQNLDALMQGFVVGDDGSWIKPKPVETVLLLKKKKESNITSNSNNNDSSPREVGVNNTGNYTHAAMSTLASKKKIPMFKKLLDRSNEVKGNLASGTVKSPSPGLTDTSAQNTDEENENGNSMKRKLVETKLTYFSDSDSDNNEGRDLDDDDDDGQEDNDIYINENDLISELKSDNLIIPKKCELPQWGKGAERHVRTVRVGLKGVVKEAGAFRRQSG.

The interval 1–184 is N-terminal SAM-like domain; sequence MTLRILLLLH…KKLLDRSNEV (184 aa). Residues 134-144 are compositionally biased toward low complexity; that stretch reads NITSNSNNNDS. Disordered stretches follow at residues 134–155, 187–254, and 271–313; these read NITSNSNNNDSSPREVGVNNTG, NLAS…QEDN, and NLII…RQSG. Residues 185-270 are linker; sequence KGNLASGTVK…NDLISELKSD (86 aa). A compositionally biased stretch (polar residues) spans 189 to 207; sequence ASGTVKSPSPGLTDTSAQN. The segment covering 233-254 has biased composition (acidic residues); the sequence is SDSDNNEGRDLDDDDDDGQEDN.

It belongs to the anamorsin family. As to quaternary structure, monomer. Interacts with TAH18. Interacts with MIA40.

The protein resides in the cytoplasm. It localises to the mitochondrion intermembrane space. Component of the cytosolic iron-sulfur (Fe-S) protein assembly (CIA) machinery required for the maturation of extramitochondrial Fe-S proteins. Part of an electron transfer chain functioning in an early step of cytosolic Fe-S biogenesis, facilitating the de novo assembly of a [4Fe-4S] cluster on the scaffold complex CFD1-NBP35. Electrons are transferred to DRE2 from NADPH via the FAD- and FMN-containing protein TAH18. TAH18-DRE2 are also required for the assembly of the diferric tyrosyl radical cofactor of ribonucleotide reductase (RNR), probably by providing electrons for reduction during radical cofactor maturation in the catalytic small subunit RNR2. This is Fe-S cluster assembly protein DRE2 (DRE2) from Lodderomyces elongisporus (strain ATCC 11503 / CBS 2605 / JCM 1781 / NBRC 1676 / NRRL YB-4239) (Yeast).